Reading from the N-terminus, the 352-residue chain is Selenide, water dikinase (352 aa).

Residue C23 is part of the active site. ATP is bound by residues K26 and 54-56 (SRD). D57 contributes to the Mg(2+) binding site. ATP is bound by residues D74, D97, and 145 to 147 (GHS). D97 is a Mg(2+) binding site. A Mg(2+)-binding site is contributed by D233.

The protein belongs to the selenophosphate synthase 1 family. Class I subfamily. Homodimer. Mg(2+) serves as cofactor.

It catalyses the reaction hydrogenselenide + ATP + H2O = selenophosphate + AMP + phosphate + 2 H(+). In terms of biological role, synthesizes selenophosphate from selenide and ATP. The protein is Selenide, water dikinase of Shewanella baltica (strain OS185).